Consider the following 237-residue polypeptide: UPF0758 protein Aave_3773 (237 aa).

The 123-residue stretch at 115 to 237 folds into the MPN domain; sequence LFHSPRAVRD…SLSMAEEGLI (123 aa). Residues His186, His188, and Asp199 each contribute to the Zn(2+) site. Positions 186–199 match the JAMM motif motif; sequence HNHPSGQVQPSRAD.

This sequence belongs to the UPF0758 family.

This is UPF0758 protein Aave_3773 from Paracidovorax citrulli (strain AAC00-1) (Acidovorax citrulli).